We begin with the raw amino-acid sequence, 112 residues long: Large ribosomal subunit protein P2 (112 aa).

The disordered stretch occupies residues 81–112; the sequence is VETAEAKKEDKKEEKKEEEEEEEDDLGFSLFG. Positions 84-95 are enriched in basic and acidic residues; that stretch reads AEAKKEDKKEEK. The span at 96-106 shows a compositional bias: acidic residues; that stretch reads KEEEEEEEDDL.

This sequence belongs to the eukaryotic ribosomal protein P1/P2 family. In terms of assembly, P1 and P2 exist as dimers at the large ribosomal subunit. Phosphorylated.

Its function is as follows. Plays an important role in the elongation step of protein synthesis. The sequence is that of Large ribosomal subunit protein P2 (MAL3P3.19) from Plasmodium falciparum (isolate 3D7).